The sequence spans 87 residues: Putative regulatory protein ABC2323 (87 aa).

The protein belongs to the RemA family.

The polypeptide is Putative regulatory protein ABC2323 (Shouchella clausii (strain KSM-K16) (Alkalihalobacillus clausii)).